The sequence spans 340 residues: Photosystem II assembly lipoprotein Ycf48 (340 aa).

Positions 1–26 are cleaved as a signal peptide; it reads MTSVLGLLKPLKKAIAAIAVLVLCIG. The N-palmitoyl cysteine moiety is linked to residue cysteine 27. A lipid anchor (S-diacylglycerol cysteine) is attached at cysteine 27.

The protein belongs to the Ycf48 family. Part of early PSII assembly complexes which includes D1 (psbA) and PsbI; not found in mature PSII. Binds to the lumenal side of PSII complexes. Interacts with YidC.

It is found in the cellular thylakoid membrane. A factor required for optimal assembly of photosystem II (PSII), acting in the early stages of PSII assembly. Also plays a role in replacement of photodamaged D1 (psbA). Assists YidC in synthesis of chlorophyll-binding proteins. This Picosynechococcus sp. (strain ATCC 27264 / PCC 7002 / PR-6) (Agmenellum quadruplicatum) protein is Photosystem II assembly lipoprotein Ycf48.